The following is a 627-amino-acid chain: tRNA uridine 5-carboxymethylaminomethyl modification enzyme MnmG (627 aa).

FAD is bound by residues 13–18 (GGGHAG), Val-125, and Ser-180. 274-288 (GPRYCPSIEDKVVRF) is a binding site for NAD(+). Gln-371 contacts FAD.

It belongs to the MnmG family. As to quaternary structure, homodimer. Heterotetramer of two MnmE and two MnmG subunits. FAD serves as cofactor.

The protein resides in the cytoplasm. In terms of biological role, NAD-binding protein involved in the addition of a carboxymethylaminomethyl (cmnm) group at the wobble position (U34) of certain tRNAs, forming tRNA-cmnm(5)s(2)U34. The polypeptide is tRNA uridine 5-carboxymethylaminomethyl modification enzyme MnmG (Francisella tularensis subsp. novicida (strain U112)).